The primary structure comprises 155 residues: Ribosomal RNA large subunit methyltransferase H (155 aa).

Residues Leu72, Gly103, and 122-127 (LSPLTL) contribute to the S-adenosyl-L-methionine site.

This sequence belongs to the RNA methyltransferase RlmH family. Homodimer.

The protein localises to the cytoplasm. The enzyme catalyses pseudouridine(1915) in 23S rRNA + S-adenosyl-L-methionine = N(3)-methylpseudouridine(1915) in 23S rRNA + S-adenosyl-L-homocysteine + H(+). Its function is as follows. Specifically methylates the pseudouridine at position 1915 (m3Psi1915) in 23S rRNA. In Actinobacillus pleuropneumoniae serotype 3 (strain JL03), this protein is Ribosomal RNA large subunit methyltransferase H.